Reading from the N-terminus, the 332-residue chain is MKILVFGARDYEEPVIKKWSEEHKDVQVDIYPENMTEENVVKAKGYDGISIQQTNYIDNPYIYETLKDAGVKVIASRTAGVDMIHFDLVNENGLIVTNVPSYSPNAIAELAVTQAMNLLRKTPLVKKKVCEGDYRWIAELLGTEVRSITVGVIGTGKIGATSAKLFKGLGANVIAFDQYPNSDLNDILTYKDSLEDLLKEADLITLHTPLLEGTKHMINKDTLAIMKDGAYIVNTGRGGLINTGDLIEALESGKIRAAALDTFETEGLFLNKKMNPGELTDPEINKLLSMEQVIFTHHLGFFTSTAIENIVYSSLSSAVEVIKTGTATNRVN.

Residues arginine 237 and glutamate 266 contribute to the active site. The Proton donor role is filled by histidine 298.

It belongs to the D-isomer specific 2-hydroxyacid dehydrogenase family. As to quaternary structure, monomer.

The enzyme catalyses a (2R)-2-hydroxycarboxylate + NAD(+) = a 2-oxocarboxylate + NADH + H(+). It carries out the reaction (2R)-hydroxy-4-methylpentanoate + NAD(+) = 4-methyl-2-oxopentanoate + NADH + H(+). The protein operates within amino-acid degradation; L-leucine degradation. Functionally, involved in the reductive branch of L-leucine fermentation. Catalyzes the NADH-dependent reduction of 4-methyl-2-oxopentanoate (2-oxoisocaproate) to (R)-2-hydroxy-4-methylpentanoate ((R)-2-hydroxyisocaproate). For the reverse reaction, the enzyme accepts (R)- but not (S)-2-hydroxy-4-methylpentanoate. Can also use 2-oxopentanoate, 2-oxohexanoate and phenylpyruvate but not 2-oxoisovalerate and 2-oxobutyrate. Cannot use NADPH. The polypeptide is D-2-hydroxyacid dehydrogenase (NAD(+)) (Clostridioides difficile (Peptoclostridium difficile)).